Reading from the N-terminus, the 392-residue chain is 2,3-bisphosphoglycerate-independent phosphoglycerate mutase (392 aa).

Belongs to the BPG-independent phosphoglycerate mutase family. A-PGAM subfamily.

The catalysed reaction is (2R)-2-phosphoglycerate = (2R)-3-phosphoglycerate. It functions in the pathway carbohydrate degradation; glycolysis; pyruvate from D-glyceraldehyde 3-phosphate: step 3/5. In terms of biological role, catalyzes the interconversion of 2-phosphoglycerate and 3-phosphoglycerate. The sequence is that of 2,3-bisphosphoglycerate-independent phosphoglycerate mutase from Methanothrix thermoacetophila (strain DSM 6194 / JCM 14653 / NBRC 101360 / PT) (Methanosaeta thermophila).